A 1155-amino-acid polypeptide reads, in one-letter code: Cilia- and flagella-associated protein 251 (1155 aa).

2 stretches are compositionally biased toward basic and acidic residues: residues 1-19 (MSDA…GETE) and 31-59 (KEVE…KTGE). Disordered stretches follow at residues 1-144 (MSDA…KLSL) and 167-225 (LDQI…DIQS). Over residues 60–69 (EEGEEEEEKE) the composition is skewed to acidic residues. The segment covering 70–95 (EEGKKDKKIVMEETEEKAGESQEKEA) has biased composition (basic and acidic residues). The span at 99-111 (QEETTVEPQEVTE) shows a compositional bias: low complexity. Polar residues-rich tracts occupy residues 118 to 128 (TQITDSQSVTS) and 172 to 182 (PEEQQISSPER). The span at 201–220 (GQERRDLEPENREEGQERTV) shows a compositional bias: basic and acidic residues. WD repeat units follow at residues 341-383 (PVHT…IWKW), 391-431 (ACTL…AWYE), 442-481 (LLTE…VWDI), 499-534 (PCKL…FYDH), 537-597 (SIVN…VYHL), 601-641 (GTKL…VWNY), 647-684 (LFSR…ILDA), 694-730 (PFKY…MLVV), 737-780 (WEYL…GYDL), 791-831 (LDIH…LFNA), 837-883 (RKTL…ILPV), 889-927 (KTSA…QWKI), 965-1005 (YFYY…FYPS), and 1025-1065 (GKLI…GYTN).

It localises to the cytoplasm. Its subcellular location is the cytoskeleton. The protein resides in the cilium axoneme. It is found in the cell projection. The protein localises to the cilium. It localises to the flagellum. Involved in spermatozoa motility. May also regulate cilium motility through its role in the assembly of the axonemal radial spokes. The polypeptide is Cilia- and flagella-associated protein 251 (Pongo abelii (Sumatran orangutan)).